A 480-amino-acid polypeptide reads, in one-letter code: MTSVQQPRTLAEKVWDSHVVVRGTGEGEAREPDLIYIDLHLVHEVTSPQAFDGLRLAGRQVRRPDLTIATEDHNVPTIDIDKPIADPVSRTQVETLRKNCEEFGIRLHPMGDAEQGIVHVVGPQLGLTQPGTTVVCGDSHTSTHGAFGALAMGIGTSEVEHVLATQTLPLRPFRTMAINIDGSLPTGVTSKDVILAVIAKIGTGGGQGYVLEYRGQAVEEMSMEARMTMCNMSIEAGARAGMVAPDETTYAYLKDRPHAPKGQLWDAAVAEWDSLRTDEGAQFDAEVHIDASTLTPFVTWGTNPGQGVPLGADVPDPELMADEEERLAAEKALTYMDLTPGTPMREIPVDTVFVGSCTNGRIEDLRAVADVLRDRKVAAGVTMLIVPGSMRVRAQAESEGLGEIFAAAGAQWRQAGCSMCLGMNPDQLSPGQRCASTSNRNFEGRQGKGGRTHLVSPAVAAATAVRGKLSSPADLAKSVK.

Positions 357, 417, and 420 each coordinate [4Fe-4S] cluster. The span at 431–441 (GQRCASTSNRN) shows a compositional bias: polar residues. Positions 431–454 (GQRCASTSNRNFEGRQGKGGRTHL) are disordered.

It belongs to the aconitase/IPM isomerase family. LeuC type 1 subfamily. In terms of assembly, heterodimer of LeuC and LeuD. [4Fe-4S] cluster is required as a cofactor.

The catalysed reaction is (2R,3S)-3-isopropylmalate = (2S)-2-isopropylmalate. It functions in the pathway amino-acid biosynthesis; L-leucine biosynthesis; L-leucine from 3-methyl-2-oxobutanoate: step 2/4. Catalyzes the isomerization between 2-isopropylmalate and 3-isopropylmalate, via the formation of 2-isopropylmaleate. In Mycobacteroides abscessus (strain ATCC 19977 / DSM 44196 / CCUG 20993 / CIP 104536 / JCM 13569 / NCTC 13031 / TMC 1543 / L948) (Mycobacterium abscessus), this protein is 3-isopropylmalate dehydratase large subunit.